The sequence spans 143 residues: Nucleoside diphosphate kinase (143 aa).

Residues lysine 11, phenylalanine 59, arginine 87, threonine 93, arginine 104, and asparagine 114 each coordinate ATP. The active-site Pros-phosphohistidine intermediate is histidine 117.

Belongs to the NDK family. In terms of assembly, homotetramer. Requires Mg(2+) as cofactor.

The protein resides in the cytoplasm. It catalyses the reaction a 2'-deoxyribonucleoside 5'-diphosphate + ATP = a 2'-deoxyribonucleoside 5'-triphosphate + ADP. It carries out the reaction a ribonucleoside 5'-diphosphate + ATP = a ribonucleoside 5'-triphosphate + ADP. Functionally, major role in the synthesis of nucleoside triphosphates other than ATP. The ATP gamma phosphate is transferred to the NDP beta phosphate via a ping-pong mechanism, using a phosphorylated active-site intermediate. In Shewanella baltica (strain OS223), this protein is Nucleoside diphosphate kinase.